The following is a 464-amino-acid chain: Phosphoglucosamine mutase (464 aa).

The active-site Phosphoserine intermediate is serine 112. Mg(2+) is bound by residues serine 112, aspartate 252, aspartate 254, and aspartate 256. Phosphoserine is present on serine 112.

It belongs to the phosphohexose mutase family. It depends on Mg(2+) as a cofactor. In terms of processing, activated by phosphorylation.

It carries out the reaction alpha-D-glucosamine 1-phosphate = D-glucosamine 6-phosphate. In terms of biological role, catalyzes the conversion of glucosamine-6-phosphate to glucosamine-1-phosphate. The sequence is that of Phosphoglucosamine mutase from Synechococcus sp. (strain CC9605).